The following is a 488-amino-acid chain: DNA polymerase processivity factor (488 aa).

3 disordered regions span residues 1-26 (MTDSPGGVAPASPVEDASDASLGQPE), 331-453 (SPSA…RSGS), and 469-488 (PGAFSAFRGGPQTPYGFGFP). Residues 331–344 (SPSAGSSASRASGS) are compositionally biased toward low complexity. Positions 345-355 (EPTDSQDSASD) are enriched in polar residues. Residues 368 to 379 (AARAGEAGALHA) show a composition bias toward low complexity. The segment covering 383–393 (PSSTTRVTPTT) has biased composition (polar residues). The Bipartite nuclear localization signal motif lies at 394-413 (KRGRSGGEDARADTALKKPK). Basic and acidic residues predominate over residues 398–409 (SGGEDARADTAL). Low complexity predominate over residues 437-453 (ADGTAARPAAPDARSGS).

This sequence belongs to the herpesviridae DNA polymerase processivity factor family. As to quaternary structure, interacts with the DNA polymerase catalytic subunit UL30. Interacts with the origin-binding protein.

It localises to the host nucleus. Plays an essential role in viral DNA replication by acting as the polymerase accessory subunit. Associates with the viral polymerase to increase its processivity and forms high-affinity direct interactions with DNA. Facilitates the origin-binding protein UL9 loading onto DNA thus increasing its ability to assemble into a functional complex capable of unwinding duplex DNA. The sequence is that of DNA polymerase processivity factor from Homo sapiens (Human).